Here is a 557-residue protein sequence, read N- to C-terminus: Hepatocyte nuclear factor 1-beta (557 aa).

The tract at residues 1–31 (MVSKLTSLQQELLSALLSSGVTKEVLIQALE) is dimerization. The HNF-p1 domain occupies 1 to 32 (MVSKLTSLQQELLSALLSSGVTKEVLIQALEE). Residues S49, S52, S75, and S80 each carry the phosphoserine modification. Residues 66–85 (TNGHAKGRLSGDEGSEDGDD) are disordered. One can recognise a POU-specific atypical domain in the interval 93–188 (KELQALNTEE…ILRQFNQTVQ (96 aa)). A DNA-binding region (homeobox; HNF1-type) is located at residues 231–311 (MRRNRFKWGP…NRRKEEAFRQ (81 aa)). The tract at residues 324 to 370 (HNLNPLLTHGSPHHQPSSSPPNKLSGVRYSQPGNNEVTSSSTISHHG) is disordered. Positions 354-370 (QPGNNEVTSSSTISHHG) are enriched in polar residues.

The protein belongs to the HNF1 homeobox family. As to quaternary structure, binds DNA as a dimer. Can form homodimer or heterodimer with HNF1-alpha. Interacts (via HNF-p1 domain) with PCBD1; the interaction increases its transactivation activity. Liver, kidney and intestine.

It localises to the nucleus. Transcription factor that binds to the inverted palindrome 5'-GTTAATNATTAAC-3'. Binds to the FPC element in the cAMP regulatory unit of the PLAU gene. Transcriptional activity is increased by coactivator PCBD1. In Rattus norvegicus (Rat), this protein is Hepatocyte nuclear factor 1-beta (Hnf1b).